The sequence spans 159 residues: Transcriptional repressor NrdR (159 aa).

A zinc finger spans residues 3–34 (CPFCRHEDTQVVDSRVSEDGAAIRRRRRCSAC). Residues 49 to 139 (PAVVKKDGSR…VYRRFEDVSE (91 aa)) form the ATP-cone domain.

Belongs to the NrdR family. The cofactor is Zn(2+).

In terms of biological role, negatively regulates transcription of bacterial ribonucleotide reductase nrd genes and operons by binding to NrdR-boxes. This chain is Transcriptional repressor NrdR, found in Burkholderia ambifaria (strain MC40-6).